The sequence spans 710 residues: MKTWKREILGREFIVEHGKVAKQANGAVVARIGDTTVLATAVMSDSAVEGIDFVPLTVEFQERFYAAGKIPGGFIKREGKPSEMAILSARTIDRPIRPLFPKHLRNEVQVVVTVISTDSVNTPDIVGVFAASLALNISDIPFNGIVAAVRVGLVDGKIVLFPTEDQLQKSLLDIVVAGTEDTITMVEGEAKEVSESQMLQALLKAHDAIKQIIDFEKEILSYFNIEKAQIAEKTLPEEIEKEFSQLLDGNELRERLLIQGKKARSNALSEYFKKIYEILEARYGTEKIEELSVLLKDKYEEALKYKMRRIIVEEGTRLDMRKPKDIRPITCETGLLPRVHGSALFTRGETQSLGIVTLGAPMDEQIIDSLLEEGTKRFMLHYNFPPFSTGEVKPLRGPSRREIGHGHLAERALKFVLPDEDRFPYTIRIVSEILESNGSSSMATVCSGSLALMDAGVPISKHVAGVAMGLILEKDSQIVLTDILGAEDHWGDMDFKVAGTRDGITAFQMDCKVSGVSADLLERALNQAKEARLYVLEKLYETISKPRDTLSKYAPVIKVISIDPSKVAEIIGPGGKIIKALIKDYDVKISVDDLTGKVSVIGGNEEKVDAAIEQINSILKEISVGDVFSGKVTRIEPFGVFVEISPGKVGLLHQSKLITDLKTVKIGETMRVKVSNIDNLGRLQLEEFSDSPDHKHGEKRSFKRHRKNDN.

Mg(2+)-binding residues include D488 and D494. One can recognise a KH domain in the interval 555–615 (PVIKVISIDP…EKVDAAIEQI (61 aa)). Residues 625 to 688 (GDVFSGKVTR…NLGRLQLEEF (64 aa)) form the S1 motif domain. A disordered region spans residues 688-710 (FSDSPDHKHGEKRSFKRHRKNDN). Residues 691–700 (SPDHKHGEKR) are compositionally biased toward basic and acidic residues. Residues 701–710 (SFKRHRKNDN) are compositionally biased toward basic residues.

This sequence belongs to the polyribonucleotide nucleotidyltransferase family. Mg(2+) serves as cofactor.

The protein resides in the cytoplasm. The enzyme catalyses RNA(n+1) + phosphate = RNA(n) + a ribonucleoside 5'-diphosphate. Involved in mRNA degradation. Catalyzes the phosphorolysis of single-stranded polyribonucleotides processively in the 3'- to 5'-direction. This is Polyribonucleotide nucleotidyltransferase from Pseudothermotoga lettingae (strain ATCC BAA-301 / DSM 14385 / NBRC 107922 / TMO) (Thermotoga lettingae).